A 266-amino-acid polypeptide reads, in one-letter code: Gasdermin bGSDM (266 aa).

Residue Cys-3 is the site of S-palmitoyl cysteine attachment. The next 4 membrane-spanning stretches (beta stranded) occupy residues 69 to 85 (ISGQ…GLSI), 97 to 115 (KLGL…FEFQ), 163 to 180 (KFTI…ELTI), and 189 to 205 (GNVK…KICY).

Belongs to the bacterial gasdermin family. Monomer. In terms of assembly, forms large, homooligomeric ring-shaped pores when inserted in membranes. Post-translationally, palmitoylation helps stabilize the inactive state; may self palmitoylate. Palmitoylation plays a significant role in pore formation.

Its subcellular location is the cytoplasm. It is found in the cell inner membrane. The full-length protein before cleavage is inactive: intramolecular interactions between the N-terminal domain and the C-terminal region as well as the lipid modification, mediate autoinhibition. The pyroptosis-like-inducing activity is carried by the released N-terminal domain (Gasdermin bGSDM, N-terminus). Functionally, precursor of a pore-forming protein involved in defense against bacteriophages. Expression of bGSDM and the neighboring protease gene (Ga0182885_104520) is toxic in E.coli. Cleavage of this precursor by its dedicated protease releases the active moiety (gasdermin bGSDM, N-terminus) which inserts into membranes, forming pores and triggering cell death. Its function is as follows. Pore-forming protein that causes membrane permeabilization via a pyroptosis-like activity. Makes ring-like pores when released. This Desulfuromonadales bacterium protein is Gasdermin bGSDM.